The chain runs to 314 residues: Mitochondrial 2-oxoglutarate/malate carrier protein (314 aa).

Ala2 is subject to N-acetylalanine. A Phosphoserine modification is found at Ser6. Solcar repeat units lie at residues 23 to 108, 117 to 208, and 217 to 306; these read VKFL…LFER, PGFL…SKQF, and DNIL…MNKA. The helical transmembrane segment at 24–42 threads the bilayer; sequence KFLFGGLAGMGATVFVQPL. Lys57 is modified (N6-succinyllysine). The chain crosses the membrane as a helical span at residues 83–101; sequence GLSAGLLRQATYTTTRLGI. Tyr102 is modified (phosphotyrosine). 3 helical membrane passes run 119–140, 183–202, and 222–240; these read FLLK…GTPA, GCIP…LASY, and HFCA…SMPV. Lys256 carries the post-translational modification N6-acetyllysine. Residues 281–300 form a helical membrane-spanning segment; the sequence is GFTPYYARLGPHTVLTFIFL.

Belongs to the mitochondrial carrier (TC 2.A.29) family. Interacts with SMIM26. The N-terminus is blocked. As to expression, heart, liver and brain.

It is found in the mitochondrion inner membrane. It catalyses the reaction (S)-malate(in) + 2-oxoglutarate(out) = (S)-malate(out) + 2-oxoglutarate(in). The catalysed reaction is malonate(in) + 2-oxoglutarate(out) = malonate(out) + 2-oxoglutarate(in). It carries out the reaction succinate(in) + 2-oxoglutarate(out) = succinate(out) + 2-oxoglutarate(in). The enzyme catalyses maleate(in) + 2-oxoglutarate(out) = maleate(out) + 2-oxoglutarate(in). It catalyses the reaction oxaloacetate(in) + 2-oxoglutarate(out) = oxaloacetate(out) + 2-oxoglutarate(in). Functionally, catalyzes the transport of 2-oxoglutarate (alpha-oxoglutarate) across the inner mitochondrial membrane in an electroneutral exchange for malate. Can also exchange 2-oxoglutarate for other dicarboxylic acids such as malonate, succinate, maleate and oxaloacetate, although with lower affinity. Contributes to several metabolic processes, including the malate-aspartate shuttle, the oxoglutarate/isocitrate shuttle, in gluconeogenesis from lactate, and in nitrogen metabolism. Maintains mitochondrial fusion and fission events, and the organization and morphology of cristae. Involved in the regulation of apoptosis. Helps protect from cytotoxic-induced apoptosis by modulating glutathione levels in mitochondria. The sequence is that of Mitochondrial 2-oxoglutarate/malate carrier protein (SLC25A11) from Bos taurus (Bovine).